The following is a 577-amino-acid chain: Glycine--tRNA ligase (577 aa).

2 residues coordinate substrate: Arg-96 and Glu-161. Residues 193–195, 203–208, 319–320, and 434–437 each bind ATP; these read RNE, IRLREF, EI, and GIDR. Substrate is bound at residue 208-212; that stretch reads FSQAE. Residue 430–434 coordinates substrate; it reads EPSFG.

It belongs to the class-II aminoacyl-tRNA synthetase family.

It localises to the cytoplasm. The enzyme catalyses tRNA(Gly) + glycine + ATP = glycyl-tRNA(Gly) + AMP + diphosphate. Its function is as follows. Catalyzes the attachment of glycine to tRNA(Gly). The chain is Glycine--tRNA ligase from Methanothrix thermoacetophila (strain DSM 6194 / JCM 14653 / NBRC 101360 / PT) (Methanosaeta thermophila).